We begin with the raw amino-acid sequence, 153 residues long: Regulator of sigma D (153 aa).

Belongs to the Rsd/AlgQ family. Interacts with RpoD.

Its subcellular location is the cytoplasm. Binds RpoD and negatively regulates RpoD-mediated transcription activation by preventing the interaction between the primary sigma factor RpoD with the catalytic core of the RNA polymerase and with promoter DNA. May be involved in replacement of the RNA polymerase sigma subunit from RpoD to RpoS during the transition from exponential growth to the stationary phase. The sequence is that of Regulator of sigma D from Pectobacterium atrosepticum (strain SCRI 1043 / ATCC BAA-672) (Erwinia carotovora subsp. atroseptica).